We begin with the raw amino-acid sequence, 209 residues long: FMN-dependent NADH:quinone oxidoreductase 2 (209 aa).

FMN is bound by residues Ser9, 15–17 (SVS), and 97–100 (MWNF).

It belongs to the azoreductase type 1 family. As to quaternary structure, homodimer. The cofactor is FMN.

The enzyme catalyses 2 a quinone + NADH + H(+) = 2 a 1,4-benzosemiquinone + NAD(+). The catalysed reaction is N,N-dimethyl-1,4-phenylenediamine + anthranilate + 2 NAD(+) = 2-(4-dimethylaminophenyl)diazenylbenzoate + 2 NADH + 2 H(+). Quinone reductase that provides resistance to thiol-specific stress caused by electrophilic quinones. Its function is as follows. Also exhibits azoreductase activity. Catalyzes the reductive cleavage of the azo bond in aromatic azo compounds to the corresponding amines. In Pseudomonas syringae pv. tomato (strain ATCC BAA-871 / DC3000), this protein is FMN-dependent NADH:quinone oxidoreductase 2.